Consider the following 498-residue polypeptide: ATP synthase subunit beta, chloroplastic (498 aa).

172–179 (GGAGVGKT) is a binding site for ATP.

It belongs to the ATPase alpha/beta chains family. In terms of assembly, F-type ATPases have 2 components, CF(1) - the catalytic core - and CF(0) - the membrane proton channel. CF(1) has five subunits: alpha(3), beta(3), gamma(1), delta(1), epsilon(1). CF(0) has four main subunits: a(1), b(1), b'(1) and c(9-12).

It is found in the plastid. Its subcellular location is the chloroplast thylakoid membrane. It catalyses the reaction ATP + H2O + 4 H(+)(in) = ADP + phosphate + 5 H(+)(out). Its function is as follows. Produces ATP from ADP in the presence of a proton gradient across the membrane. The catalytic sites are hosted primarily by the beta subunits. The polypeptide is ATP synthase subunit beta, chloroplastic (Galbulimima belgraveana (Northern pigeonberry ash)).